The chain runs to 198 residues: Nucleoid occlusion factor SlmA (198 aa).

Residues 10-70 (NRREEILQSL…SLIEFIEDSL (61 aa)) form the HTH tetR-type domain. The H-T-H motif DNA-binding region spans 33–52 (TTAKLAASVGVSEAALYRHF). A coiled-coil region spans residues 117–145 (EQDRLQGRINQLFERIEAQLRQVMREKKM).

This sequence belongs to the nucleoid occlusion factor SlmA family. In terms of assembly, homodimer. Interacts with FtsZ.

It localises to the cytoplasm. It is found in the nucleoid. Its function is as follows. Required for nucleoid occlusion (NO) phenomenon, which prevents Z-ring formation and cell division over the nucleoid. Acts as a DNA-associated cell division inhibitor that binds simultaneously chromosomal DNA and FtsZ, and disrupts the assembly of FtsZ polymers. SlmA-DNA-binding sequences (SBS) are dispersed on non-Ter regions of the chromosome, preventing FtsZ polymerization at these regions. The protein is Nucleoid occlusion factor SlmA of Klebsiella pneumoniae subsp. pneumoniae (strain ATCC 700721 / MGH 78578).